The primary structure comprises 257 residues: Aquaporin TIP4-2 (257 aa).

2 helical membrane passes run 32–52 (LVLTFLFVFTGVSASMAAGAG) and 63–83 (TLAAVAIAHALAAGVLVTAGF). Positions 91–93 (NPA) match the NPA 1 motif. 3 consecutive transmembrane segments (helical) span residues 107 to 127 (LRALLYVAAQLLASSLACILL), 150 to 170 (GLVMEVILTFSLLFVTYAMIL), and 178 to 198 (TIGPLLTGLIVGANSLAGGNF). The NPA 2 motif lies at 204 to 206 (NPA). The chain crosses the membrane as a helical span at residues 225 to 245 (WIGPLLGGSLAGFVYESLFMV).

Belongs to the MIP/aquaporin (TC 1.A.8) family. TIP (TC 1.A.8.10) subfamily.

The protein resides in the vacuole membrane. Aquaporins facilitate the transport of water and small neutral solutes across cell membranes. The sequence is that of Aquaporin TIP4-2 (TIP4-2) from Zea mays (Maize).